Reading from the N-terminus, the 928-residue chain is Protein Niban 1 (928 aa).

Gly-2 carries the N-myristoyl glycine lipid modification. Residues Ser-579, Ser-582, Ser-596, Ser-602, and Ser-646 each carry the phosphoserine modification. The segment covering Val-580–Ser-596 has biased composition (polar residues). Positions Val-580–Arg-600 are disordered. Disordered stretches follow at residues Val-618–Gln-654 and Ala-669–Gly-707. Residues Leu-690–Glu-701 are compositionally biased toward acidic residues. Position 708 is a phosphoserine (Ser-708). Disordered stretches follow at residues Pro-723–Ser-877 and Pro-899–Glu-928. Over residues Gly-801 to Glu-818 the composition is skewed to low complexity. Basic and acidic residues predominate over residues His-825 to Glu-834. Low complexity predominate over residues Met-865–Ser-877. Residues Leu-905 to Glu-915 are compositionally biased toward basic and acidic residues. Ser-926 is modified (phosphoserine).

It belongs to the Niban family. As to expression, expressed in various types of thyroid tumor such as papillary thyroid carcinomas and oxyphilic thyroid tumors but not in normal thyroid tissue (at protein level). Strongly expressed in heart, skeletal muscle, pancreas, white blood cells and prostate with moderate expression in colon and spleen. Expressed in renal carcinoma cells but not in normal kidney.

Its subcellular location is the cytoplasm. The protein resides in the membrane. Regulates phosphorylation of a number of proteins involved in translation regulation including EIF2A, EIF4EBP1 and RPS6KB1. May be involved in the endoplasmic reticulum stress response. In Homo sapiens (Human), this protein is Protein Niban 1.